Consider the following 132-residue polypeptide: DNA-directed RNA polymerase subunit omega (132 aa).

Residues 100 to 119 (VSAEEEASHGTAGMSAEELE) form a disordered region.

The protein belongs to the RNA polymerase subunit omega family. In terms of assembly, the RNAP catalytic core consists of 2 alpha, 1 beta, 1 beta' and 1 omega subunit. When a sigma factor is associated with the core the holoenzyme is formed, which can initiate transcription.

The enzyme catalyses RNA(n) + a ribonucleoside 5'-triphosphate = RNA(n+1) + diphosphate. Functionally, promotes RNA polymerase assembly. Latches the N- and C-terminal regions of the beta' subunit thereby facilitating its interaction with the beta and alpha subunits. This chain is DNA-directed RNA polymerase subunit omega, found in Gluconacetobacter diazotrophicus (strain ATCC 49037 / DSM 5601 / CCUG 37298 / CIP 103539 / LMG 7603 / PAl5).